Reading from the N-terminus, the 112-residue chain is Ribonuclease P protein component (112 aa).

It belongs to the RnpA family. As to quaternary structure, consists of a catalytic RNA component (M1 or rnpB) and a protein subunit.

It catalyses the reaction Endonucleolytic cleavage of RNA, removing 5'-extranucleotides from tRNA precursor.. RNaseP catalyzes the removal of the 5'-leader sequence from pre-tRNA to produce the mature 5'-terminus. It can also cleave other RNA substrates such as 4.5S RNA. The protein component plays an auxiliary but essential role in vivo by binding to the 5'-leader sequence and broadening the substrate specificity of the ribozyme. The chain is Ribonuclease P protein component from Mesomycoplasma hyopneumoniae (strain 7448) (Mycoplasma hyopneumoniae).